The chain runs to 501 residues: Aspartate--tRNA ligase, cytoplasmic (501 aa).

T52 carries the post-translational modification Phosphothreonine. An N6-acetyllysine modification is found at K74. E229 is a binding site for L-aspartate. Phosphoserine is present on S249. Residues 251–254 (QLYK) are aspartate. R273 lines the L-aspartate pocket. ATP is bound by residues 273-275 (RAE) and 281-283 (RHL). K374 is modified (N6-acetyllysine). E424 provides a ligand contact to ATP. L-aspartate contacts are provided by S427 and R431. 472–475 (GLER) is a binding site for ATP.

It belongs to the class-II aminoacyl-tRNA synthetase family. Type 2 subfamily. In terms of assembly, homodimer. Part of a multisubunit complex that groups tRNA ligases for Arg (RARS1), Asp (DARS1), Gln (QARS1), Ile (IARS1), Leu (LARS1), Lys (KARS1), Met (MARS1) the bifunctional ligase for Glu and Pro (EPRS1) and the auxiliary subunits AIMP1/p43, AIMP2/p38 and EEF1E1/p18.

Its subcellular location is the cytoplasm. It catalyses the reaction tRNA(Asp) + L-aspartate + ATP = L-aspartyl-tRNA(Asp) + AMP + diphosphate. Functionally, catalyzes the specific attachment of an amino acid to its cognate tRNA in a 2 step reaction: the amino acid (AA) is first activated by ATP to form AA-AMP and then transferred to the acceptor end of the tRNA. The protein is Aspartate--tRNA ligase, cytoplasmic (Dars1) of Mus musculus (Mouse).